We begin with the raw amino-acid sequence, 127 residues long: Translation initiation factor 5A (127 aa).

The residue at position 36 (Lys36) is a Hypusine.

It belongs to the eIF-5A family.

Its subcellular location is the cytoplasm. Functionally, functions by promoting the formation of the first peptide bond. The protein is Translation initiation factor 5A (eif5a) of Halobacterium salinarum (strain ATCC 700922 / JCM 11081 / NRC-1) (Halobacterium halobium).